The following is a 124-amino-acid chain: UPF0231 protein Sbal223_3655 (124 aa).

It belongs to the UPF0231 family.

The chain is UPF0231 protein Sbal223_3655 from Shewanella baltica (strain OS223).